A 453-amino-acid chain; its full sequence is Membrane-bound acylglycerophosphatidylinositol O-acyltransferase mboa-7 (453 aa).

Transmembrane regions (helical) follow at residues 4–24, 36–56, 79–99, 154–174, 195–215, 220–240, and 244–264; these read ILGLMSKDDWIYTGLLLFSFG, ILASGALGFAMSLFIIGPKIV, LYVFLTTFTYLMFVRFAHYIL, AYFYHFCGLFTGPYYTYQMLI, VRLLWSVPVFVITNHYFPLDI, AIWEVSFFTRLVYAALIFVVF, and VYSAWAIAESICVILGIGIYP. Asparagine 319 carries an N-linked (GlcNAc...) asparagine glycan. Histidine 350 is a catalytic residue. Transmembrane regions (helical) follow at residues 354–374 and 421–441; these read AGYFMSFGVVAMCAILEDVIF and FWSSIYYWLPLLCIPFYIYSA.

It belongs to the membrane-bound acyltransferase family. In terms of tissue distribution, expressed ubiquitously throughout development from early embryo to larval and adult stages. In adults, strongly expressed in pharyngeal muscle, body wall muscle, vulval cells, distal tip cells, intestinal cells and spermatheca.

Its subcellular location is the membrane. It carries out the reaction 1-octadecanoyl-sn-glycero-3-phospho-(1D-myo-inositol) + (5Z,8Z,11Z,14Z,17Z)-eicosapentaenoyl-CoA = 1-octadecanoyl-2-(5Z,8Z,11Z,14Z,17Z-eicosapentaenoyl)-sn-glycero-3-phospho-(1D-myo-inositol) + CoA. The catalysed reaction is a 1-acyl-sn-glycero-3-phospho-(1D-myo-inositol) + (5Z,8Z,11Z,14Z,17Z)-eicosapentaenoyl-CoA = a 1-acyl-2-(5Z,8Z,11Z,14Z,17Z-eicosapentaenoyl)-sn-glycero-3-phospho-(1D-myo-inositol) + CoA. The enzyme catalyses a 1-acyl-sn-glycero-3-phospho-(1D-myo-inositol) + (5Z,8Z,11Z,14Z)-eicosatetraenoyl-CoA = a 1-acyl-2-(5Z,8Z,11Z,14Z-eicosatetraenoyl)-sn-glycero-3-phospho-(1D-myo-inositol) + CoA. Its pathway is lipid metabolism; phospholipid metabolism. In terms of biological role, acyltransferase which mediates the conversion of lysophosphatidylinositol (1-acyl-sn-glycero-3-phosphatidylinositol or LPI) into phosphatidylinositol (1,2-diacyl-sn-glycero-3-phosphoinositol or PI) (LPIAT activity). Prefers sn-2-LPI rather than sn-1-LPI as the acyl acceptor. Lysophospholipid acyltransferases (LPLATs) catalyze the reacylation step of the phospholipid remodeling pathway also known as the Lands cycle. Involved in the selective incorporation of arachidonoyl-CoA ((5Z,8Z,11Z,14Z)-eicosatetraenoyl-CoA) and (5Z,8Z,11Z,14Z,17Z)-eicosapentaenoyl-CoA (EPA-CoA) into PI. Besides its role in biomembranes, PI is a precursor of PI 3-phosphate (PIP3) and its fatty acid composition has an important role in PI3P signaling. This Caenorhabditis elegans protein is Membrane-bound acylglycerophosphatidylinositol O-acyltransferase mboa-7.